The chain runs to 85 residues: MDPKKIARINELAKKKKTVGLTGPEKVEQAKLREEYIEGYRRSVRHHIEGIKLVDEEGNDVTPEKLRQVQREKGLHGRSLDDPKS.

A disordered region spans residues 62–85 (TPEKLRQVQREKGLHGRSLDDPKS).

The protein belongs to the UPF0291 family.

Its subcellular location is the cytoplasm. The chain is UPF0291 protein SpyM3_1470 from Streptococcus pyogenes serotype M3 (strain ATCC BAA-595 / MGAS315).